A 501-amino-acid chain; its full sequence is Phenylalanine--tRNA ligase alpha subunit (501 aa).

2 residues coordinate L-phenylalanine: Thr340 and Phe423. Mg(2+) is bound at residue Glu425. L-phenylalanine is bound at residue Phe448.

Belongs to the class-II aminoacyl-tRNA synthetase family. Phe-tRNA synthetase alpha subunit type 2 subfamily. As to quaternary structure, tetramer of two alpha and two beta subunits. It depends on Mg(2+) as a cofactor.

The protein localises to the cytoplasm. The catalysed reaction is tRNA(Phe) + L-phenylalanine + ATP = L-phenylalanyl-tRNA(Phe) + AMP + diphosphate + H(+). This Methanococcus vannielii (strain ATCC 35089 / DSM 1224 / JCM 13029 / OCM 148 / SB) protein is Phenylalanine--tRNA ligase alpha subunit.